The primary structure comprises 227 residues: UPF0758 protein Dhaf_4352 (227 aa).

In terms of domain architecture, MPN spans 105–227; that stretch reads VINSPQDIAH…YISLKERGIL (123 aa). Residues His-176, His-178, and Asp-189 each contribute to the Zn(2+) site. The JAMM motif signature appears at 176–189; it reads HNHPSGDPTPSSED.

It belongs to the UPF0758 family.

The polypeptide is UPF0758 protein Dhaf_4352 (Desulfitobacterium hafniense (strain DSM 10664 / DCB-2)).